Reading from the N-terminus, the 108-residue chain is ATPase inhibitor, mitochondrial (108 aa).

The N-terminal 25 residues, M1–F25, are a transit peptide targeting the mitochondrion. The segment at F25 to G48 is disordered. An N-terminal inhibitory region region spans residues S26–Q52. Residues A69–D108 are a coiled coil. The antiparallel alpha-helical coiled coil region stretch occupies residues H74–D106. K103 carries the N6-succinyllysine modification.

It belongs to the ATPase inhibitor family. As to quaternary structure, homodimer; represents the active form and is present at a pH value below 6.5. Homotetramer; represents the inactive form and is present at a pH value above 7.0.

It localises to the mitochondrion. Its function is as follows. Endogenous F(1)F(o)-ATPase inhibitor limiting ATP depletion when the mitochondrial membrane potential falls below a threshold and the F(1)F(o)-ATP synthase starts hydrolyzing ATP to pump protons out of the mitochondrial matrix. Required to avoid the consumption of cellular ATP when the F(1)F(o)-ATP synthase enzyme acts as an ATP hydrolase. Indirectly acts as a regulator of heme synthesis in erythroid tissues: regulates heme synthesis by modulating the mitochondrial pH and redox potential, allowing FECH to efficiently catalyze the incorporation of iron into protoporphyrin IX to produce heme. The chain is ATPase inhibitor, mitochondrial from Sus scrofa (Pig).